The following is a 102-amino-acid chain: DET1- and DDB1-associated protein 1 (102 aa).

Residues 67 to 102 form a disordered region; sequence NAAKKRDQEQVEIEGENSAPPRKIARTDSQDMNEDT.

It belongs to the DDA1 family. As to quaternary structure, component of numerous DCX (DDB1-CUL4-X-box) E3 ubiquitin-protein ligase complexes which consist of a core of DDB1, cullin-4 (CUL4A or CUL4B), DDA1 and RBX1.

The protein operates within protein modification; protein ubiquitination. Functions as a component of numerous distinct DCX (DDB1-CUL4-X-box) E3 ubiquitin-protein ligase complexes which mediate the ubiquitination and subsequent proteasomal degradation of target proteins. In the DCX complexes, acts as a scaffolding subunit required to stabilize the complex. The sequence is that of DET1- and DDB1-associated protein 1 from Gallus gallus (Chicken).